Consider the following 295-residue polypeptide: NAD kinase (295 aa).

D72 acts as the Proton acceptor in catalysis. NAD(+)-binding positions include 72-73 (DG), 146-147 (ND), R157, K174, D176, 187-192 (TAYALS), and Q247.

Belongs to the NAD kinase family. Requires a divalent metal cation as cofactor.

Its subcellular location is the cytoplasm. It catalyses the reaction NAD(+) + ATP = ADP + NADP(+) + H(+). Its function is as follows. Involved in the regulation of the intracellular balance of NAD and NADP, and is a key enzyme in the biosynthesis of NADP. Catalyzes specifically the phosphorylation on 2'-hydroxyl of the adenosine moiety of NAD to yield NADP. The polypeptide is NAD kinase (Azotobacter vinelandii (strain DJ / ATCC BAA-1303)).